A 452-amino-acid chain; its full sequence is MNSGISQVFQRELTCPICLNYFIDPVTIDCGHSFCRPCFYLNWQDIPILTQCFECLKTTQQRNLKTNIRLKKMASRARKASLWLFLSSEEQMCGTHRETKKIFCEVDRSLLCLLCSSSLEHRYHRHCPAEWAAEEHREKLLKKMQSLWEKVCENQRNLNVETTRISHWKDYVNVRLEAIRAEYQKMPAFHHEEEKHNLEMLKKKGKDIFHRLHLSKAKMAHRREILRGTYAELMKMCHKPDVELLQAFGDILHRSESVLLHMPQPLNLELRAGPITGLRDRLNQFRVDITLPHNEANSHIFRRGDLRSICIGCDRQNAPHITATPTSFLAWGAQTFTSGKYYWEVHVGDSWNWAFGVCNKYWKGTNQNGNIHGEEGLFSLGCVKNDIQCSLFTTSPLTLQYVPRPTNHVGLFLDCEARTVSFVDVNQSSPIHTIPNCSFSPPLRPIFCCVHL.

An RING-type zinc finger spans residues 15–56; it reads CPICLNYFIDPVTIDCGHSFCRPCFYLNWQDIPILTQCFECL. A B box-type zinc finger spans residues 88 to 129; it reads SEEQMCGTHRETKKIFCEVDRSLLCLLCSSSLEHRYHRHCPA. 4 residues coordinate Zn(2+): C93, H96, C115, and H121. The region spanning 269–452 is the B30.2/SPRY domain; it reads ELRAGPITGL…LRPIFCCVHL (184 aa).

It belongs to the TRIM/RBCC family.

This is Tripartite motif-containing protein 49D from Homo sapiens (Human).